The sequence spans 440 residues: Thymidine phosphorylase (440 aa).

This sequence belongs to the thymidine/pyrimidine-nucleoside phosphorylase family. As to quaternary structure, homodimer.

It catalyses the reaction thymidine + phosphate = 2-deoxy-alpha-D-ribose 1-phosphate + thymine. The protein operates within pyrimidine metabolism; dTMP biosynthesis via salvage pathway; dTMP from thymine: step 1/2. Its function is as follows. The enzymes which catalyze the reversible phosphorolysis of pyrimidine nucleosides are involved in the degradation of these compounds and in their utilization as carbon and energy sources, or in the rescue of pyrimidine bases for nucleotide synthesis. The polypeptide is Thymidine phosphorylase (Shigella dysenteriae serotype 1 (strain Sd197)).